We begin with the raw amino-acid sequence, 426 residues long: Glutamate-1-semialdehyde 2,1-aminomutase (426 aa).

Residue K264 is modified to N6-(pyridoxal phosphate)lysine.

This sequence belongs to the class-III pyridoxal-phosphate-dependent aminotransferase family. HemL subfamily. The cofactor is pyridoxal 5'-phosphate.

Its subcellular location is the cytoplasm. It catalyses the reaction (S)-4-amino-5-oxopentanoate = 5-aminolevulinate. Its pathway is porphyrin-containing compound metabolism; protoporphyrin-IX biosynthesis; 5-aminolevulinate from L-glutamyl-tRNA(Glu): step 2/2. The sequence is that of Glutamate-1-semialdehyde 2,1-aminomutase from Methanocella arvoryzae (strain DSM 22066 / NBRC 105507 / MRE50).